Reading from the N-terminus, the 398-residue chain is 4-hydroxy-3-methylbut-2-enyl diphosphate reductase (398 aa).

Residue C66 participates in [4Fe-4S] cluster binding. (2E)-4-hydroxy-3-methylbut-2-enyl diphosphate is bound at residue H96. A dimethylallyl diphosphate-binding site is contributed by H96. H96 contributes to the isopentenyl diphosphate binding site. A [4Fe-4S] cluster-binding site is contributed by C157. H185 contacts (2E)-4-hydroxy-3-methylbut-2-enyl diphosphate. H185 contacts dimethylallyl diphosphate. H185 serves as a coordination point for isopentenyl diphosphate. E187 functions as the Proton donor in the catalytic mechanism. T250 contacts (2E)-4-hydroxy-3-methylbut-2-enyl diphosphate. Residue C288 participates in [4Fe-4S] cluster binding. 4 residues coordinate (2E)-4-hydroxy-3-methylbut-2-enyl diphosphate: S317, S318, N319, and S379. Positions 317, 318, 319, and 379 each coordinate dimethylallyl diphosphate. Isopentenyl diphosphate contacts are provided by S317, S318, N319, and S379.

This sequence belongs to the IspH family. [4Fe-4S] cluster is required as a cofactor.

It catalyses the reaction isopentenyl diphosphate + 2 oxidized [2Fe-2S]-[ferredoxin] + H2O = (2E)-4-hydroxy-3-methylbut-2-enyl diphosphate + 2 reduced [2Fe-2S]-[ferredoxin] + 2 H(+). It carries out the reaction dimethylallyl diphosphate + 2 oxidized [2Fe-2S]-[ferredoxin] + H2O = (2E)-4-hydroxy-3-methylbut-2-enyl diphosphate + 2 reduced [2Fe-2S]-[ferredoxin] + 2 H(+). It participates in isoprenoid biosynthesis; dimethylallyl diphosphate biosynthesis; dimethylallyl diphosphate from (2E)-4-hydroxy-3-methylbutenyl diphosphate: step 1/1. The protein operates within isoprenoid biosynthesis; isopentenyl diphosphate biosynthesis via DXP pathway; isopentenyl diphosphate from 1-deoxy-D-xylulose 5-phosphate: step 6/6. In terms of biological role, catalyzes the conversion of 1-hydroxy-2-methyl-2-(E)-butenyl 4-diphosphate (HMBPP) into a mixture of isopentenyl diphosphate (IPP) and dimethylallyl diphosphate (DMAPP). Acts in the terminal step of the DOXP/MEP pathway for isoprenoid precursor biosynthesis. In Synechococcus sp. (strain CC9311), this protein is 4-hydroxy-3-methylbut-2-enyl diphosphate reductase.